The chain runs to 259 residues: Putative protein-tyrosine sulfotransferase (259 aa).

A disulfide bridge connects residues Cys13 and Cys68. The Proton donor/acceptor role is filled by Glu16. N-linked (GlcNAc...) asparagine glycosylation occurs at Asn36. Residues Arg95, Ser103, and Arg107 each contribute to the 3'-phosphoadenylyl sulfate site. N-linked (GlcNAc...) asparagine glycosylation is present at Asn115. Cys137 and Cys144 form a disulfide bridge. 3'-phosphoadenylyl sulfate is bound by residues Tyr149 and 194–203; that span reads SASQVKNSIN.

Belongs to the protein sulfotransferase family.

The catalysed reaction is L-tyrosyl-[protein] + 3'-phosphoadenylyl sulfate = O-sulfo-L-tyrosine-[protein] + adenosine 3',5'-bisphosphate + H(+). Catalyzes the O-sulfation of tyrosine residues within acidic motifs of polypeptides, using 3'-phosphoadenylyl sulfate (PAPS) as cosubstrate. The polypeptide is Putative protein-tyrosine sulfotransferase (tpst-2) (Caenorhabditis elegans).